The sequence spans 312 residues: tRNA uridine(34) hydroxylase (312 aa).

Residues 123–217 (SDPEVLLIDT…YLEEVPQEQS (95 aa)) form the Rhodanese domain. Cys-177 functions as the Cysteine persulfide intermediate in the catalytic mechanism. The segment covering 282–293 (ARERQKQIELAR) has biased composition (basic and acidic residues). Positions 282-312 (ARERQKQIELARQRNQPHPLGRDPRQSTLEN) are disordered.

The protein belongs to the TrhO family.

The enzyme catalyses uridine(34) in tRNA + AH2 + O2 = 5-hydroxyuridine(34) in tRNA + A + H2O. Catalyzes oxygen-dependent 5-hydroxyuridine (ho5U) modification at position 34 in tRNAs. This chain is tRNA uridine(34) hydroxylase, found in Pseudomonas aeruginosa (strain UCBPP-PA14).